A 279-amino-acid chain; its full sequence is DegV domain-containing protein spr1019 (279 aa).

One can recognise a DegV domain in the interval 4–277; the sequence is IKIVTDSSVT…ENAWAILIRY (274 aa). Hexadecanoate contacts are provided by threonine 62 and serine 94.

Its function is as follows. May bind long-chain fatty acids, such as palmitate, and may play a role in lipid transport or fatty acid metabolism. The chain is DegV domain-containing protein spr1019 from Streptococcus pneumoniae (strain ATCC BAA-255 / R6).